The primary structure comprises 209 residues: MKTSQWIDISQPLNNDIATWPGDTPFSYEVSWSKENSGSVNVGKLTMSIHTGTHIDAPFHFDNDGKKVLDLDIQVYVGPARIIDVSNLESIGKKELENFHLEGVERLLLRTSSHGKANEFPDVIPHLRADIAAFLSEKGIRLIGVDVPSVDPLDDKELAAHHQLFKHGIHILENVVLDHVVDGDYELIALPLALTDADGSPVRAVIRPI.

Trp20 provides a ligand contact to substrate. Zn(2+)-binding residues include His50, His54, and Asp56. The active-site Proton donor/acceptor is His60. The Zn(2+) site is built by His161 and Glu173.

This sequence belongs to the Cyclase 1 superfamily. KynB family. As to quaternary structure, homodimer. Requires Zn(2+) as cofactor.

It catalyses the reaction N-formyl-L-kynurenine + H2O = L-kynurenine + formate + H(+). It participates in amino-acid degradation; L-tryptophan degradation via kynurenine pathway; L-kynurenine from L-tryptophan: step 2/2. In terms of biological role, catalyzes the hydrolysis of N-formyl-L-kynurenine to L-kynurenine, the second step in the kynurenine pathway of tryptophan degradation. The sequence is that of Kynurenine formamidase from Bacillus mycoides (strain KBAB4) (Bacillus weihenstephanensis).